Reading from the N-terminus, the 994-residue chain is Translation initiation factor IF-2 (994 aa).

Polar residues-rich tracts occupy residues 1 to 10 and 28 to 40; these read MSDENNNGRN and SVSSGTVKQSFSH. The interval 1–405 is disordered; the sequence is MSDENNNGRN…REKRKGGAQE (405 aa). Low complexity predominate over residues 76-91; sequence PQKPAGPAQAPRAPQG. A compositionally biased stretch (basic and acidic residues) spans 98-131; it reads AEERAARQRAIELARQQEADRRAREERARAEAEA. Over residues 132 to 146 the composition is skewed to low complexity; the sequence is ARAAQQKAAQAAAEP. A compositionally biased stretch (pro residues) spans 147-157; sequence PAAPPPAPAAP. The segment covering 158-172 has biased composition (low complexity); sequence PAAAAPAAPAAEAAP. Positions 173 to 188 are enriched in pro residues; the sequence is APKPAPSPRPVPPSAP. A compositionally biased stretch (low complexity) spans 189 to 204; the sequence is APQAARPAAEAPPRQA. 2 stretches are compositionally biased toward basic and acidic residues: residues 216–235 and 247–273; these read PDRRDDRPSTTTYRPERPSN and PRRDDDRGPRPPRRDDDRGPRRDDRPQ. Over residues 298-310 the composition is skewed to gly residues; it reads RGPGGPRGPGGPR. Composition is skewed to basic and acidic residues over residues 336-350 and 390-402; these read VDRRPDEDDRRRDPG and RAREREREKRKGG. One can recognise a tr-type G domain in the interval 492-662; it reads PRPPVVAVMG…LLQAEVLDLK (171 aa). The segment at 501–508 is G1; sequence GHVDHGKT. 501–508 serves as a coordination point for GTP; it reads GHVDHGKT. Residues 526–530 are G2; that stretch reads GITQH. A G3 region spans residues 548–551; that stretch reads DTPG. GTP-binding positions include 548–552 and 602–605; these read DTPGH and NKID. Residues 602 to 605 form a G4 region; it reads NKID. Positions 638–640 are G5; it reads SAT.

This sequence belongs to the TRAFAC class translation factor GTPase superfamily. Classic translation factor GTPase family. IF-2 subfamily.

The protein resides in the cytoplasm. Its function is as follows. One of the essential components for the initiation of protein synthesis. Protects formylmethionyl-tRNA from spontaneous hydrolysis and promotes its binding to the 30S ribosomal subunits. Also involved in the hydrolysis of GTP during the formation of the 70S ribosomal complex. The protein is Translation initiation factor IF-2 of Phenylobacterium zucineum (strain HLK1).